Reading from the N-terminus, the 395-residue chain is RNA polymerase II elongation factor ELL3 (395 aa).

2 disordered regions span residues 129 to 177 and 189 to 281; these read LTEG…SEPM and PSRE…SPEE. S242 bears the Phosphoserine mark. Over residues 243-260 the composition is skewed to acidic residues; that stretch reads QEGEDWGQDEDEEGDEDG. Positions 269-279 are enriched in low complexity; the sequence is SAPSASESPSP. An OCEL domain is found at 283–393; the sequence is PDYLLQYRAI…LILEFEEKNR (111 aa).

This sequence belongs to the ELL/occludin family. Component of the little elongation complex (LEC), at least composed of ELL (ELL, ELL2 or ELL3), ZC3H8, ICE1 and ICE2. Component of the super elongation complex (SEC), at least composed of EAF1, EAF2, CDK9, MLLT3/AF9, AFF (AFF1 or AFF4), the P-TEFb complex and ELL (ELL, ELL2 or ELL3). Interacts with AFF4. As to expression, actively expressed in embryonic stem cells (ES cells), while it is weakly expressed in differentiated cells.

It is found in the nucleus. In terms of biological role, enhancer-binding elongation factor that specifically binds enhancers in embryonic stem cells (ES cells), marks them, and is required for their future activation during stem cell specification. Elongation factor component of the super elongation complex (SEC), a complex required to increase the catalytic rate of RNA polymerase II transcription by suppressing transient pausing by the polymerase at multiple sites along the DNA. Component of the little elongation complex (LEC), a complex required to regulate small nuclear RNA (snRNA) gene transcription by RNA polymerase II and III. Does not only bind to enhancer regions of active genes, but also marks the enhancers that are in a poised or inactive state in ES cells and is required for establishing proper RNA polymerase II occupancy at developmentally regulated genes in a cohesin-dependent manner. Probably required for priming developmentally regulated genes for later recruitment of the super elongation complex (SEC), for transcriptional activation during differentiation. Required for recruitment of P-TEFb within SEC during differentiation. Probably preloaded on germ cell chromatin, suggesting that it may prime gene activation by marking enhancers as early as in the germ cells. Promoting epithelial-mesenchymal transition (EMT). The protein is RNA polymerase II elongation factor ELL3 (Ell3) of Mus musculus (Mouse).